The following is a 1487-amino-acid chain: Major viral transcription factor (1487 aa).

Disordered stretches follow at residues 41 to 295 (AAPD…LPPG), 310 to 371 (LAKT…EEAP), 409 to 442 (REPL…SRDG), and 803 to 1007 (PPTR…HTPR). The segment covering 66-75 (VIPPPSPAPE) has biased composition (pro residues). Composition is skewed to low complexity over residues 165-193 (PSSA…SSSS) and 201-213 (DGAG…SSSS). The span at 214-224 (DDSDSDEGGEE) shows a compositional bias: acidic residues. Residues 235–272 (AAKTPSAAGSPGPSSGGDRPAAGAATPKSCRSGAASPG) are compositionally biased toward low complexity. Residues 273–285 (APAPAPASAPAPS) show a composition bias toward pro residues. 3 stretches are compositionally biased toward low complexity: residues 807-829 (SQQP…AEGS), 849-860 (PSSHSQSPQHSQ), and 867-877 (ATTATCCRATQ). The span at 878–893 (TNARSRGQQHQPQKAR) shows a compositional bias: polar residues. Basic residues predominate over residues 920-929 (HGRPRGKSGK). Positions 938–951 (AAQAGASASFSSSA) are enriched in low complexity. Over residues 988 to 1007 (GPDRRGGFRRVPRGDCHTPR) the composition is skewed to basic and acidic residues.

It belongs to the herpesviridae ICP4 family. Post-translationally, a long stretch of serine residues may be a major site of phosphorylation.

The protein resides in the host nucleus. Its function is as follows. This IE protein is a multifunctional protein capable of migrating to the nucleus, binding to DNA, trans-activating other viral genes, and autoregulating its own synthesis. The protein is Major viral transcription factor (IE) of Equine herpesvirus 1 (strain Kentucky A) (EHV-1).